Consider the following 133-residue polypeptide: Putative biopolymer transport protein ExbD-like 2 (133 aa).

Topologically, residues Met1–Val9 are cytoplasmic. The chain crosses the membrane as a helical span at residues Val10 to Val30. Topologically, residues Gln31–Asn133 are periplasmic.

This sequence belongs to the ExbD/TolR family.

It localises to the cell inner membrane. The sequence is that of Putative biopolymer transport protein ExbD-like 2 from Helicobacter pylori (strain J99 / ATCC 700824) (Campylobacter pylori J99).